Consider the following 310-residue polypeptide: Acetyl-coenzyme A carboxylase carboxyl transferase subunit alpha (310 aa).

One can recognise a CoA carboxyltransferase C-terminal domain in the interval 31-285; it reads SFERELRIIN…KQKILRRLKQ (255 aa).

This sequence belongs to the AccA family. As to quaternary structure, acetyl-CoA carboxylase is a heterohexamer composed of biotin carboxyl carrier protein (accB), biotin carboxylase (accC) and two subunits each of ACCase subunit alpha (accA) and ACCase subunit beta (accD).

The protein resides in the plastid. It localises to the chloroplast. It catalyses the reaction N(6)-carboxybiotinyl-L-lysyl-[protein] + acetyl-CoA = N(6)-biotinyl-L-lysyl-[protein] + malonyl-CoA. It participates in lipid metabolism; malonyl-CoA biosynthesis; malonyl-CoA from acetyl-CoA: step 1/1. Functionally, component of the acetyl coenzyme A carboxylase (ACC) complex. First, biotin carboxylase catalyzes the carboxylation of biotin on its carrier protein (BCCP) and then the CO(2) group is transferred by the carboxyltransferase to acetyl-CoA to form malonyl-CoA. This Cyanidioschyzon merolae (strain NIES-3377 / 10D) (Unicellular red alga) protein is Acetyl-coenzyme A carboxylase carboxyl transferase subunit alpha.